The chain runs to 546 residues: Src substrate cortactin (546 aa).

The disordered stretch occupies residues 1 to 28; sequence MWKASAGHAVSITQDDGGADDWETDPDF. Residues 17–28 show a composition bias toward acidic residues; that stretch reads GGADDWETDPDF. Cortactin repeat units follow at residues 80–116, 117–153, 154–190, 191–227, 228–264, and 265–301; these read ASHGYGGKFGVEQDRMDRSAVGHEYQSKLSKHCSQVD, SVRGFGGKFGVQMDRVDQSAVGFEYQGKTEKHASQKD, YSSGFGGKYGVQADRVDKSAVGFDYQGKTEKHESQKD, YSKGFGGKYGIDKDKVDKSAVGFEYQGKTEKHESQKD, YVKGFGGKFGVQTDRQDKCALGWDHQEKLQLHESQKD, and YKTGFGGKFGVQSERQDSSAVGFDYKERLAKHESQQD. 2 positions are modified to N6-acetyllysine: Lys87 and Lys107. At Ser113 the chain carries Phosphoserine. Omega-N-methylarginine is present on Arg119. Position 124 is an N6-acetyllysine (Lys124). Lys144 is subject to N6-acetyllysine; alternate. Lys144 is covalently cross-linked (Glycyl lysine isopeptide (Lys-Gly) (interchain with G-Cter in SUMO1); alternate). Lys144 is covalently cross-linked (Glycyl lysine isopeptide (Lys-Gly) (interchain with G-Cter in SUMO2); alternate). Residue Ser150 is modified to Phosphoserine. N6-acetyllysine occurs at positions 152, 161, and 171. Lys181 carries the post-translational modification N6-acetyllysine; alternate. A Glycyl lysine isopeptide (Lys-Gly) (interchain with G-Cter in SUMO1); alternate cross-link involves residue Lys181. Residue Lys181 forms a Glycyl lysine isopeptide (Lys-Gly) (interchain with G-Cter in SUMO2); alternate linkage. Lys193 and Lys198 each carry N6-acetyllysine. Lys218 participates in a covalent cross-link: Glycyl lysine isopeptide (Lys-Gly) (interchain with G-Cter in SUMO1). Lys235 is modified (N6-acetyllysine). Ser261 bears the Phosphoserine mark. Lys272 carries the N6-acetyllysine modification. Lys295 is subject to N6-acetyllysine; alternate. Lys295 is covalently cross-linked (Glycyl lysine isopeptide (Lys-Gly) (interchain with G-Cter in SUMO2); alternate). A Cortactin 7; truncated repeat occupies 302–324; sequence YAKGFGGKYGVQKDRMDKNASTF. Lys304, Lys309, Lys314, and Lys346 each carry N6-acetyllysine. Residues 348–401 adopt a coiled-coil conformation; sequence SNIRANFENLAKEREQEDRRKAEAERAQRMAKERQEQEEARRKLEEQARAKKQT. The tract at residues 355 to 424 is disordered; the sequence is ENLAKEREQE…PPSSPIYEDA (70 aa). Residues 357 to 396 are compositionally biased toward basic and acidic residues; sequence LAKEREQEDRRKAEAERAQRMAKERQEQEEARRKLEEQAR. Thr401 is modified (phosphothreonine). Residues Ser405, Ser407, Ser417, and Ser418 each carry the phosphoserine modification. Tyr421 and Tyr442 each carry phosphotyrosine. Position 443 is a phosphoserine (Ser443). Tyr466 is subject to Phosphotyrosine; by FAK1. Phosphotyrosine; by SRC is present on residues Tyr482 and Tyr485. The 59-residue stretch at 488–546 folds into the SH3 domain; that stretch reads DLGITAIALYDYQAAGDDEISFDPDDIITNIEMIDDGWWRGVCKGRYGLFPANYVELRQ.

Part of a complex composed of NEDD9, AURKA and CTTN; within the complex NEDD9 acts as a scaffold protein and is required for complex formation. Interacts (via N-terminus) with NEDD9. Identified in a complex containing FGFR4, NCAM1, CDH2, PLCG1, FRS2, SRC, SHC1, GAP43 and CTTN. Forms a complex with ABL1 and MYLK. Interacts with SHANK2 and SHANK3 (via its SH3 domain). Interacts with PLXDC2 and SRCIN1. Interacts with SAMSN1 (via SH3 domain). Interacts (via SH3 domain) with ASAP1 (via Pro-rich region). Interacts (via SH3 domain) with DNM2. Interacts with ACTN1. Interacts with FER. Interacts with KCNA2 (via non-phosphorylated C-terminus). Interacts with FGD1. Interacts with ABL2. Interacts with CTTNBP2NL; this interaction may target CTTN to stress fibers. Interacts with CTTNBP2; this interaction may target CTTN at the cell cortex or dendritic spines. Interacts with KCNH1. Interacts (via SH3 domain) with DIP2A (via N-terminus); the interaction enhances CTTN acetylation and is required for proper synaptic transmission. Interacts with XIRP1 (via N-terminus); the interaction promotes CTTN localization to intercalated disks in cardiomyocytes. Post-translationally, acetylated. Phosphorylated by FER. Phosphorylated in response to FGR activation. Phosphorylation by SRC promotes MYLK binding. Phosphorylated on tyrosine residues in response to CHRM1 activation. Phosphorylated by PTK2/FAK1 in response to cell adhesion. Tyrosine phosphorylation in transformed cells may contribute to cellular growth regulation and transformation. Phosphorylated by PKN2 at both serine and threonine residues in a GTP-bound Rac1-dependent manner in hyaluronan-induced astrocytes and hence down-regulated CTTN ability to associate with filamentous actin. In terms of tissue distribution, expressed at intercalated disks in the heart (at protein level). Expressed in most tissues, except in B-lymphocytes or plasma cells.

It localises to the cytoplasm. It is found in the cytoskeleton. The protein resides in the cell projection. Its subcellular location is the lamellipodium. The protein localises to the ruffle. It localises to the dendrite. It is found in the cell membrane. The protein resides in the podosome. Its subcellular location is the cell junction. The protein localises to the focal adhesion. It localises to the membrane. It is found in the clathrin-coated pit. The protein resides in the dendritic spine. Its subcellular location is the cell cortex. The protein localises to the endoplasmic reticulum. In terms of biological role, contributes to the organization of the actin cytoskeleton and cell shape. Plays a role in the formation of lamellipodia and in cell migration. Plays a role in the regulation of neuron morphology, axon growth and formation of neuronal growth cones. Through its interaction with CTTNBP2, involved in the regulation of neuronal spine density. Plays a role in focal adhesion assembly and turnover. In complex with ABL1 and MYLK regulates cortical actin-based cytoskeletal rearrangement critical to sphingosine 1-phosphate (S1P)-mediated endothelial cell (EC) barrier enhancement. Plays a role in intracellular protein transport and endocytosis, and in modulating the levels of potassium channels present at the cell membrane. Plays a role in receptor-mediated endocytosis via clathrin-coated pits. Required for stabilization of KCNH1 channels at the cell membrane. This is Src substrate cortactin (Cttn) from Mus musculus (Mouse).